We begin with the raw amino-acid sequence, 210 residues long: Large ribosomal subunit protein uL3 (210 aa).

It belongs to the universal ribosomal protein uL3 family. As to quaternary structure, part of the 50S ribosomal subunit. Forms a cluster with proteins L14 and L19.

Functionally, one of the primary rRNA binding proteins, it binds directly near the 3'-end of the 23S rRNA, where it nucleates assembly of the 50S subunit. The polypeptide is Large ribosomal subunit protein uL3 (Pseudothermotoga lettingae (strain ATCC BAA-301 / DSM 14385 / NBRC 107922 / TMO) (Thermotoga lettingae)).